A 286-amino-acid chain; its full sequence is Polyamine aminopropyltransferase (286 aa).

The 234-residue stretch at Thr-5–Asp-238 folds into the PABS domain. Position 33 (Gln-33) interacts with S-methyl-5'-thioadenosine. His-64 and Asp-88 together coordinate spermidine. Residues Glu-108 and Asp-140–Gly-141 each bind S-methyl-5'-thioadenosine. Residue Asp-158 is the Proton acceptor of the active site. Spermidine is bound at residue Asp-158–Asp-161. Pro-165 is an S-methyl-5'-thioadenosine binding site.

The protein belongs to the spermidine/spermine synthase family. Homodimer or homotetramer.

The protein localises to the cytoplasm. The enzyme catalyses S-adenosyl 3-(methylsulfanyl)propylamine + putrescine = S-methyl-5'-thioadenosine + spermidine + H(+). Its pathway is amine and polyamine biosynthesis; spermidine biosynthesis; spermidine from putrescine: step 1/1. In terms of biological role, catalyzes the irreversible transfer of a propylamine group from the amino donor S-adenosylmethioninamine (decarboxy-AdoMet) to putrescine (1,4-diaminobutane) to yield spermidine. This Salmonella enteritidis PT4 (strain P125109) protein is Polyamine aminopropyltransferase.